A 194-amino-acid chain; its full sequence is Protein GrpE (194 aa).

It belongs to the GrpE family. In terms of assembly, homodimer.

Its subcellular location is the cytoplasm. In terms of biological role, participates actively in the response to hyperosmotic and heat shock by preventing the aggregation of stress-denatured proteins, in association with DnaK and GrpE. It is the nucleotide exchange factor for DnaK and may function as a thermosensor. Unfolded proteins bind initially to DnaJ; upon interaction with the DnaJ-bound protein, DnaK hydrolyzes its bound ATP, resulting in the formation of a stable complex. GrpE releases ADP from DnaK; ATP binding to DnaK triggers the release of the substrate protein, thus completing the reaction cycle. Several rounds of ATP-dependent interactions between DnaJ, DnaK and GrpE are required for fully efficient folding. In Aliivibrio salmonicida (strain LFI1238) (Vibrio salmonicida (strain LFI1238)), this protein is Protein GrpE.